The sequence spans 590 residues: Aspartate--tRNA(Asp/Asn) ligase (590 aa).

Glu175 contacts L-aspartate. The interval Gln199–Lys202 is aspartate. L-aspartate is bound by residues Arg221 and His450. Residue Arg221 to Glu223 participates in ATP binding. Residue Glu484 participates in ATP binding. Residue Arg491 participates in L-aspartate binding. Residue Gly536 to Arg539 participates in ATP binding.

It belongs to the class-II aminoacyl-tRNA synthetase family. Type 1 subfamily. As to quaternary structure, homodimer.

The protein resides in the cytoplasm. It catalyses the reaction tRNA(Asx) + L-aspartate + ATP = L-aspartyl-tRNA(Asx) + AMP + diphosphate. Aspartyl-tRNA synthetase with relaxed tRNA specificity since it is able to aspartylate not only its cognate tRNA(Asp) but also tRNA(Asn). Reaction proceeds in two steps: L-aspartate is first activated by ATP to form Asp-AMP and then transferred to the acceptor end of tRNA(Asp/Asn). This Nitrobacter hamburgensis (strain DSM 10229 / NCIMB 13809 / X14) protein is Aspartate--tRNA(Asp/Asn) ligase.